The following is a 1705-amino-acid chain: ALK tyrosine kinase receptor (1705 aa).

A signal peptide spans 1-21; the sequence is MIARILYFFLWSAAFLPELQC. At 22–1035 the chain is on the extracellular side; the sequence is ASQRTADALT…SLSHLALGLS (1014 aa). N40 and N48 each carry an N-linked (GlcNAc...) asparagine glycan. The segment at 54–76 is heparin-binding region; that stretch reads RIKRKTLSVDFAVPSLLRYYLAL. Residues N124, N259, N334, N434, N442, N458, N484, N578, N590, and N635 are each glycosylated (N-linked (GlcNAc...) asparagine). One can recognise an MAM domain in the interval 486 to 644; it reads SYCSFGREDC…NFTLSMECFL (159 aa). C694 and C707 are disulfide-bonded. An N-linked (GlcNAc...) asparagine glycan is attached at N717. An intrachain disulfide couples C788 to C799. N808 and N881 each carry an N-linked (GlcNAc...) asparagine glycan. Positions 842–892 are disordered; it reads GGGRGYSSQSETPEEVMDRDPSIPGRNGKSGTAGGGGGWNDSAPVPQGGRP. Residues C903 and C921 are joined by a disulfide bond. N979 is a glycosylation site (N-linked (GlcNAc...) asparagine). 2 cysteine pairs are disulfide-bonded: C980–C988 and C983–C997. The tract at residues 980 to 1016 is EGF-like; the sequence is CSHCESGDCHETSEGMVCYCDEELTLAPDGVSCINST. N1014 carries an N-linked (GlcNAc...) asparagine glycan. Residues 1036–1056 traverse the membrane as a helical segment; the sequence is VGTSALIAALLLAVSGVMIMY. Over 1057–1705 the chain is Cytoplasmic; sequence RRKHTELQSI…KMEGHNATVL (649 aa). In terms of domain architecture, Protein kinase spans 1113–1389; that stretch reads ISLTRGLGHG…IDYCLQDPDV (277 aa). ATP is bound by residues 1119–1127 and K1147; that span reads LGHGAFGEV. D1246 serves as the catalytic Proton acceptor. Disordered stretches follow at residues 1395–1499, 1505–1524, 1532–1557, 1588–1613, and 1646–1681; these read PVEY…GHVN, AHSS…WNPT, QQQK…GQEQ, QQQQ…PAPT, and GLPM…DSRP. The segment covering 1484 to 1493 has biased composition (polar residues); that stretch reads KPSSTTSNAQ. Low complexity-rich tracts occupy residues 1532–1544 and 1588–1602; these read QQQK…AQRQ and QQQQ…LCRP. Positions 1603–1613 are enriched in pro residues; the sequence is LLPPPPPPAPT.

It belongs to the protein kinase superfamily. Tyr protein kinase family. Insulin receptor subfamily. In terms of assembly, homodimer; homodimerizes upon binding to alkal ligands (alkal1, alkal2a or alkal2b). Highly expressed in the developing central nervous system: highly expressed in brain, with much lower expression in heart, caudal fin and testis.

The protein resides in the cell membrane. It catalyses the reaction L-tyrosyl-[protein] + ATP = O-phospho-L-tyrosyl-[protein] + ADP + H(+). Inhibited by ALK inhibitor TAE684. In terms of biological role, receptor tyrosine kinase required for neurogenesis in the developing central nervous system. Following activation by alkal ligands (alkal1, alkal2a or alkal2b) at the cell surface, transduces an extracellular signal into an intracellular response. Ligand-binding to the extracellular domain induces tyrosine kinase activation, resulting in the activation of the mitogen-activated protein kinase (MAPK) pathway. Phosphorylates almost exclusively at the first tyrosine of the Y-x-x-x-Y-Y motif. The sequence is that of ALK tyrosine kinase receptor from Danio rerio (Zebrafish).